The chain runs to 693 residues: Phosphoribosylformylglycinamidine synthase subunit PurL (693 aa).

Histidine 34 is an active-site residue. ATP is bound by residues tyrosine 37 and lysine 76. A Mg(2+)-binding site is contributed by glutamate 78. Residues serine 79 to histidine 82 and arginine 101 contribute to the substrate site. Histidine 80 serves as the catalytic Proton acceptor. Aspartate 102 is a binding site for Mg(2+). Glutamine 222 is a binding site for substrate. Aspartate 248 provides a ligand contact to Mg(2+). Substrate is bound at residue glutamate 292–glutamine 294. The ATP site is built by aspartate 470 and glycine 507. Serine 510 is a substrate binding site.

It belongs to the FGAMS family. Monomer. Part of the FGAM synthase complex composed of 1 PurL, 1 PurQ and 2 PurS subunits.

Its subcellular location is the cytoplasm. It catalyses the reaction N(2)-formyl-N(1)-(5-phospho-beta-D-ribosyl)glycinamide + L-glutamine + ATP + H2O = 2-formamido-N(1)-(5-O-phospho-beta-D-ribosyl)acetamidine + L-glutamate + ADP + phosphate + H(+). Its pathway is purine metabolism; IMP biosynthesis via de novo pathway; 5-amino-1-(5-phospho-D-ribosyl)imidazole from N(2)-formyl-N(1)-(5-phospho-D-ribosyl)glycinamide: step 1/2. Its function is as follows. Part of the phosphoribosylformylglycinamidine synthase complex involved in the purines biosynthetic pathway. Catalyzes the ATP-dependent conversion of formylglycinamide ribonucleotide (FGAR) and glutamine to yield formylglycinamidine ribonucleotide (FGAM) and glutamate. The FGAM synthase complex is composed of three subunits. PurQ produces an ammonia molecule by converting glutamine to glutamate. PurL transfers the ammonia molecule to FGAR to form FGAM in an ATP-dependent manner. PurS interacts with PurQ and PurL and is thought to assist in the transfer of the ammonia molecule from PurQ to PurL. In Pyrobaculum islandicum (strain DSM 4184 / JCM 9189 / GEO3), this protein is Phosphoribosylformylglycinamidine synthase subunit PurL.